A 457-amino-acid polypeptide reads, in one-letter code: Zinc finger protein ZPR1 (457 aa).

Polar residues predominate over residues 1–13; it reads MSTVSDPNSSNPP. A disordered region spans residues 1–21; sequence MSTVSDPNSSNPPESAGNIRP. C4-type zinc fingers lie at residues 43–75 and 261–293; these read CMNC…CDHC and CPSC…CGAC. Residues 414–457 are disordered; the sequence is VQSLSDDDSEPDDKLTVERYDRSYEDNEDLGLNDMKTEGYEEKA. 2 stretches are compositionally biased toward basic and acidic residues: residues 425–438 and 448–457; these read DDKL…RSYE and MKTEGYEEKA.

The protein belongs to the ZPR1 family.

Might mediate EGFR and FGFR signal transduction cascades required for lumen formation in tracheal cells. This Drosophila melanogaster (Fruit fly) protein is Zinc finger protein ZPR1.